A 158-amino-acid polypeptide reads, in one-letter code: Transcription elongation factor GreA (158 aa).

It belongs to the GreA/GreB family.

Its function is as follows. Necessary for efficient RNA polymerase transcription elongation past template-encoded arresting sites. The arresting sites in DNA have the property of trapping a certain fraction of elongating RNA polymerases that pass through, resulting in locked ternary complexes. Cleavage of the nascent transcript by cleavage factors such as GreA or GreB allows the resumption of elongation from the new 3'terminus. GreA releases sequences of 2 to 3 nucleotides. The polypeptide is Transcription elongation factor GreA (Agrobacterium fabrum (strain C58 / ATCC 33970) (Agrobacterium tumefaciens (strain C58))).